The following is a 185-amino-acid chain: Intraflagellar transport protein 22 homolog (185 aa).

Residues glycine 10 to threonine 17, aspartate 63 to aspartate 67, and histidine 123 to glycine 126 contribute to the GTP site. Residue serine 137 is modified to Phosphoserine.

Belongs to the small GTPase superfamily. Rab family. In terms of assembly, component of the IFT complex B, at least composed of IFT20, IFT22, IFT25, IFT27, IFT46, IFT52, TRAF3IP1/IFT54, IFT57, IFT74, IFT80, IFT81, and IFT88. Interacts with IFT88. Interacts with CFAP61.

It localises to the cell projection. The protein localises to the cilium. Functionally, small GTPase-like component of the intraflagellar transport (IFT) complex B. This Macaca fascicularis (Crab-eating macaque) protein is Intraflagellar transport protein 22 homolog (IFT22).